A 350-amino-acid polypeptide reads, in one-letter code: CMP-N-acetylneuraminate-beta-galactosamide-alpha-2,3-sialyltransferase 2 (350 aa).

Residues 1 to 6 (MKCSLR) are Cytoplasmic-facing. A helical; Signal-anchor for type II membrane protein membrane pass occupies residues 7–27 (VWFLSMAFLLVFIMSLLFTYS). Over 28–350 (HHSMATLPYL…ASKIEVYRGN (323 aa)) the chain is Lumenal. 3 disulfide bridges follow: Cys-70–Cys-75, Cys-72–Cys-149, and Cys-152–Cys-291. 3 residues coordinate substrate: Gln-116, Asn-157, and Asn-180. Residue Asn-211 is glycosylated (N-linked (GlcNAc...) asparagine). Residues Tyr-240, Tyr-276, Gly-280, Gly-300, His-309, and His-326 each coordinate substrate.

It belongs to the glycosyltransferase 29 family. Homodimer; disulfide-linked. Homodimer formation occurs in the endoplasmic reticulum. Post-translationally, the soluble form derives from the membrane form by proteolytic processing. N-glycosylated; necessary for proper exit from endoplasmic reticulum and trafficking to the Golgi apparatus.

It localises to the golgi apparatus. The protein resides in the golgi stack membrane. The protein localises to the secreted. It catalyses the reaction a beta-D-galactosyl-(1-&gt;3)-N-acetyl-alpha-D-galactosaminyl derivative + CMP-N-acetyl-beta-neuraminate = an N-acetyl-alpha-neuraminyl-(2-&gt;3)-beta-D-galactosyl-(1-&gt;3)-N-acetyl-alpha-D-galactosaminyl derivative + CMP + H(+). The catalysed reaction is a ganglioside GM1 (d18:1(4E)) + CMP-N-acetyl-beta-neuraminate = a ganglioside GD1a (d18:1(4E)) + CMP + H(+). It carries out the reaction ganglioside GM1 (d18:1(4E)/18:0) + CMP-N-acetyl-beta-neuraminate = ganglioside GD1a (18:1(4E)/18:0) + CMP + H(+). The enzyme catalyses a ganglioside GA1 + CMP-N-acetyl-beta-neuraminate = a ganglioside GM1b + CMP + H(+). It catalyses the reaction a ganglioside GA1 (d18:1(4E)) + CMP-N-acetyl-beta-neuraminate = a ganglioside GM1b (d18:1(4E)) + CMP + H(+). The catalysed reaction is a globoside GalGb4Cer + CMP-N-acetyl-beta-neuraminate = a globoside MSGG + CMP + H(+). It functions in the pathway protein modification; protein glycosylation. It participates in glycolipid biosynthesis. Its function is as follows. A beta-galactoside alpha2-3 sialyltransferase primarily involved in terminal sialylation of ganglio and globo series glycolipids. Catalyzes the transfer of sialic acid (N-acetyl-neuraminic acid; Neu5Ac) from the nucleotide sugar donor CMP-Neu5Ac onto acceptor Galbeta-(1-&gt;3)-GalNAc-terminated glycoconjugates through an alpha2-3 linkage. Sialylates GM1/GM1a, GA1/asialo-GM1 gangliosides to form GD1a and GM1b, respectively. Together with ST3GAL3, primarily responsible for biosynthesis of brain gangliosides that function as ligand for myelin-associated glycoprotein MAG on axons, regulating MAG expression and axonal myelin stability and regeneration. Responsible for the sialylation of the pluripotent stem cell- and cancer stem cell-associated antigen SSEA3, forming SSEA4. Sialylates with low efficiency asialofetuin, presumably onto O-glycosidically linked Galbeta-(1-&gt;3)-GalNAc-O-Ser. This is CMP-N-acetylneuraminate-beta-galactosamide-alpha-2,3-sialyltransferase 2 (St3gal2) from Rattus norvegicus (Rat).